The primary structure comprises 155 residues: Ribosomal RNA large subunit methyltransferase H (155 aa).

S-adenosyl-L-methionine contacts are provided by residues leucine 72, glycine 103, and 122 to 127 (LSALTL).

The protein belongs to the RNA methyltransferase RlmH family. As to quaternary structure, homodimer.

It is found in the cytoplasm. It carries out the reaction pseudouridine(1915) in 23S rRNA + S-adenosyl-L-methionine = N(3)-methylpseudouridine(1915) in 23S rRNA + S-adenosyl-L-homocysteine + H(+). Functionally, specifically methylates the pseudouridine at position 1915 (m3Psi1915) in 23S rRNA. In Escherichia fergusonii (strain ATCC 35469 / DSM 13698 / CCUG 18766 / IAM 14443 / JCM 21226 / LMG 7866 / NBRC 102419 / NCTC 12128 / CDC 0568-73), this protein is Ribosomal RNA large subunit methyltransferase H.